The following is an 801-amino-acid chain: Protocadherin beta-8 (801 aa).

Residues 1 to 29 (MEASGKLICRQRQVLFSFLLLGLSLAGAA) form the signal peptide. The Extracellular segment spans residues 30–691 (EPRSYSVVEE…GQADSLTVYL (662 aa)). Cadherin domains lie at 36 to 134 (VVEE…SPVF), 139 to 243 (MLVK…APEF), 248 to 348 (YRVQ…APEV), 353 to 452 (FTSP…APAF), and 457 to 562 (YTLF…SPFV). A disulfide bond links C97 and C103. N419 and N437 each carry an N-linked (GlcNAc...) asparagine glycan. A glycan (N-linked (GlcNAc...) asparagine) is linked at N568. The Cadherin 6 domain maps to 569–672 (GSAPCTELVP…LVDGFSQPYL (104 aa)). A helical membrane pass occupies residues 692–710 (VVALASVSSLFLFSVLLFV). Topologically, residues 711 to 801 (AVLLCRRSRA…NGFGFSLQLK (91 aa)) are cytoplasmic.

Forms homodimers in trans (molecules expressed by two different cells). Forms promiscuous heterodimers in cis (at the plasma membrane of the same cell) with other protocadherins.

The protein resides in the cell membrane. Functionally, calcium-dependent cell-adhesion protein involved in cells self-recognition and non-self discrimination. Thereby, it is involved in the establishment and maintenance of specific neuronal connections in the brain. This Homo sapiens (Human) protein is Protocadherin beta-8.